The chain runs to 424 residues: Serine--tRNA ligase (424 aa).

232 to 234 serves as a coordination point for L-serine; sequence TAE. 263 to 265 is a binding site for ATP; it reads RKE. E286 contributes to the L-serine binding site. Residue 350-353 coordinates ATP; sequence EISS. S386 is an L-serine binding site.

The protein belongs to the class-II aminoacyl-tRNA synthetase family. Type-1 seryl-tRNA synthetase subfamily. As to quaternary structure, homodimer. The tRNA molecule binds across the dimer.

Its subcellular location is the cytoplasm. The catalysed reaction is tRNA(Ser) + L-serine + ATP = L-seryl-tRNA(Ser) + AMP + diphosphate + H(+). The enzyme catalyses tRNA(Sec) + L-serine + ATP = L-seryl-tRNA(Sec) + AMP + diphosphate + H(+). The protein operates within aminoacyl-tRNA biosynthesis; selenocysteinyl-tRNA(Sec) biosynthesis; L-seryl-tRNA(Sec) from L-serine and tRNA(Sec): step 1/1. Its function is as follows. Catalyzes the attachment of serine to tRNA(Ser). Is also able to aminoacylate tRNA(Sec) with serine, to form the misacylated tRNA L-seryl-tRNA(Sec), which will be further converted into selenocysteinyl-tRNA(Sec). The protein is Serine--tRNA ligase of Thermodesulfovibrio yellowstonii (strain ATCC 51303 / DSM 11347 / YP87).